The primary structure comprises 47 residues: Sperm protamine P1 (47 aa).

This sequence belongs to the protamine P1 family. As to expression, testis.

The protein localises to the nucleus. The protein resides in the chromosome. Its function is as follows. Protamines substitute for histones in the chromatin of sperm during the haploid phase of spermatogenesis. They compact sperm DNA into a highly condensed, stable and inactive complex. This is Sperm protamine P1 (PRM1) from Orcinus orca (Killer whale).